Consider the following 312-residue polypeptide: Cathepsin O (312 aa).

Positions 1 to 23 (MKPQLVNLLLLCCCCLGRHGVAG) are cleaved as a signal peptide. Positions 24-98 (TWSWSHQREA…EGQRPIPNVS (75 aa)) are cleaved as a propeptide — activation peptide. N-linked (GlcNAc...) asparagine glycosylation is found at Asn53 and Asn96. Intrachain disulfides connect Cys120-Cys161, Cys154-Cys195, and Cys253-Cys301. Residue Cys123 is part of the active site. Residues His260 and Asn280 contribute to the active site.

The protein belongs to the peptidase C1 family.

The protein localises to the lysosome. It carries out the reaction The recombinant human enzyme hydrolyzes synthetic endopeptidase substrates including Z-Phe-Arg-NHMec and Z-Arg-Arg-NHMec.. Functionally, proteolytic enzyme possibly involved in normal cellular protein degradation and turnover. This is Cathepsin O (Ctso) from Mus musculus (Mouse).